Reading from the N-terminus, the 639-residue chain is MEDSQDLNEQSVKKTCTESDVSQSQNSRSMEMQDLASPHTLVGGGDTPGSSKLEKSNLSSTSVTTNGTGGENMTVLNTADWLLSCNTPSSATMSLLAVKTEPLNSSETTATTGDGALDTFTGSVITSSGYSPRSAHQYSPQLYPSKPYPHILSTPAAQTMSAYAGQTQYSGMQQPAVYTAYSQTGQPYSLPTYDLGVMLPAIKTESGLSQTQSPLQSGCLSYSPGFSTPQPGQTPYSYQMPGSSFAPSSTIYANNSVSNSTNFSGSQQDYPSYTAFGQNQYAQYYSASTYGAYMTSNNTADGTPSSTSTYQLQESLPGLTNQPGEFDTMQSPSTPIKDLDERTCRSSGSKSRGRGRKNNPSPPPDSDLERVFVWDLDETIIVFHSLLTGSYAQKYGKDPPMAVTLGLRMEEMIFNLADTHLFFNDLEECDQVHIDDVSSDDNGQDLSTYSFATDGFHAAASSANLCLPTGVRGGVDWMRKLAFRYRRVKELYNTYKNNVGGLLGPAKRDAWLQLRAEIEGLTDSWLTNALKSLSIISTRSNCINVLVTTTQLIPALAKVLLYSLGGAFPIENIYSATKIGKESCFERIMQRFGRKVVYVVIGDGVEEEQAAKKHNMPFWRISSHSDLLALHQALELEYL.

An N-acetylmethionine modification is found at Met1. Disordered stretches follow at residues Met1–Asn72, Gln210–Gly232, and Ala300–Leu368. A Glycyl lysine isopeptide (Lys-Gly) (interchain with G-Cter in SUMO2) cross-link involves residue Lys14. Over residues Glu18–Met30 the composition is skewed to polar residues. Lys52 is covalently cross-linked (Glycyl lysine isopeptide (Lys-Gly) (interchain with G-Cter in SUMO2)). Residues Ser56–Asn66 are compositionally biased toward low complexity. The segment covering Ala300–Thr334 has biased composition (polar residues). Ser361 bears the Phosphoserine mark. The active-site Nucleophile is the Asp375. 3 residues coordinate Mg(2+): Asp375, Asp377, and Asp603. Catalysis depends on Asp377, which acts as the Proton donor.

This sequence belongs to the HAD-like hydrolase superfamily. EYA family. In terms of assembly, interacts with SIX3; translocates EYA4 from the cytoplasm to the nucleus and promotes activation of their target genes. Mg(2+) serves as cofactor. As to expression, highly expressed in heart and skeletal muscle.

Its subcellular location is the cytoplasm. The protein localises to the nucleus. It carries out the reaction O-phospho-L-tyrosyl-[protein] + H2O = L-tyrosyl-[protein] + phosphate. Functionally, tyrosine phosphatase that specifically dephosphorylates 'Tyr-142' of histone H2AX (H2AXY142ph). 'Tyr-142' phosphorylation of histone H2AX plays a central role in DNA repair and acts as a mark that distinguishes between apoptotic and repair responses to genotoxic stress. Promotes efficient DNA repair by dephosphorylating H2AX, promoting the recruitment of DNA repair complexes containing MDC1. Its function as histone phosphatase probably explains its role in transcription regulation during organogenesis. May be involved in development of the eye. This chain is Protein phosphatase EYA4 (EYA4), found in Homo sapiens (Human).